The following is a 201-amino-acid chain: Protein GrpE (201 aa).

The segment at 1 to 32 (MTDRDRQPEDTTAPTGEPVVSKPYIMPDDPEP) is disordered.

The protein belongs to the GrpE family. As to quaternary structure, homodimer.

It is found in the cytoplasm. Participates actively in the response to hyperosmotic and heat shock by preventing the aggregation of stress-denatured proteins, in association with DnaK and GrpE. It is the nucleotide exchange factor for DnaK and may function as a thermosensor. Unfolded proteins bind initially to DnaJ; upon interaction with the DnaJ-bound protein, DnaK hydrolyzes its bound ATP, resulting in the formation of a stable complex. GrpE releases ADP from DnaK; ATP binding to DnaK triggers the release of the substrate protein, thus completing the reaction cycle. Several rounds of ATP-dependent interactions between DnaJ, DnaK and GrpE are required for fully efficient folding. In Bradyrhizobium diazoefficiens (strain JCM 10833 / BCRC 13528 / IAM 13628 / NBRC 14792 / USDA 110), this protein is Protein GrpE.